Here is a 240-residue protein sequence, read N- to C-terminus: Small ribosomal subunit protein uS2 (240 aa).

This sequence belongs to the universal ribosomal protein uS2 family.

This is Small ribosomal subunit protein uS2 from Haemophilus influenzae (strain 86-028NP).